The chain runs to 1969 residues: TP53-binding protein 1 (1969 aa).

Residues 1–24 (MPGEQMDPTGSQLDSDFSQQDTPC) are disordered. Over residues 8-22 (PTGSQLDSDFSQQDT) the composition is skewed to polar residues. Ser-30, Ser-68, and Ser-73 each carry phosphoserine. Residues 67–168 (VSNPEQSAVE…DSLAAEDSAS (102 aa)) are disordered. Over residues 69–85 (NPEQSAVEQGDSNSSFN) the composition is skewed to polar residues. Residues 86–95 (EHLKEKKASD) are compositionally biased toward basic and acidic residues. The span at 101–110 (HLGTSGSISQ) shows a compositional bias: polar residues. The residue at position 109 (Ser-109) is a Phosphoserine. A compositionally biased stretch (acidic residues) spans 135-148 (PEEEKEEEELEEEK). Residues 158 to 168 (ADSLAAEDSAS) show a composition bias toward low complexity. Phosphoserine occurs at positions 169, 179, and 181. Residue Lys-220 forms a Glycyl lysine isopeptide (Lys-Gly) (interchain with G-Cter in SUMO1); alternate linkage. Lys-220 is covalently cross-linked (Glycyl lysine isopeptide (Lys-Gly) (interchain with G-Cter in SUMO2); alternate). 3 disordered regions span residues 254 to 337 (EQNL…VSTP), 352 to 599 (LVQE…CKGR), and 614 to 707 (DSGS…CPEA). Phosphoserine occurs at positions 267 and 268. The segment covering 277 to 288 (ETKEQVPARELL) has biased composition (basic and acidic residues). A compositionally biased stretch (polar residues) spans 294 to 324 (VQPSSEPEVSSTQEDLFDQSSKTASDGCSTP). Position 297 is a phosphoserine (Ser-297). Thr-305 is subject to Phosphothreonine. Phosphoserine is present on residues Ser-368, Ser-382, and Ser-397. Residues 407–419 (QKLHDDEAMETEK) are compositionally biased toward basic and acidic residues. The segment covering 426–442 (PAVSPQASTPVSRSTPV) has biased composition (polar residues). Residues Ser-429, Ser-452, and Ser-464 each carry the phosphoserine modification. The span at 481-490 (HSSSLTVECS) shows a compositional bias: polar residues. The span at 491 to 501 (KTSESEPKNFT) shows a compositional bias: basic and acidic residues. Phosphoserine occurs at positions 507, 518, 523, and 525. The span at 517-528 (LSTSEYSQSSKM) shows a compositional bias: polar residues. Phosphothreonine occurs at positions 543 and 548. Residues Ser-552 and Ser-579 each carry the phosphoserine modification. Positions 566 to 582 (VLVTPSQDDQVEMSQNV) are enriched in polar residues. Basic and acidic residues predominate over residues 583–599 (DKAKEDETEDRGDCKGR). A compositionally biased stretch (polar residues) spans 614-634 (DSGSQAVPSPATRSEALSSVL). Phosphoserine is present on residues Ser-622, Ser-627, Ser-631, and Ser-632. A compositionally biased stretch (basic and acidic residues) spans 640–649 (MDTKEHHPEE). Thr-662 bears the Phosphothreonine mark. Residues 666–675 (SHREEPKEEP) show a composition bias toward basic and acidic residues. 4 positions are modified to phosphoserine: Ser-684, Ser-716, Ser-719, and Ser-763. Positions 754 to 870 (KEPSPRADVS…DDKQLGPEGA (117 aa)) are disordered. Residues 790 to 818 (AENRLDTPEEKRIECDGDSKAETTEKDAV) show a composition bias toward basic and acidic residues. Ser-822 is subject to Phosphoserine. A compositionally biased stretch (basic and acidic residues) spans 830-839 (VRDEPVRPDQ). Thr-912 is modified (phosphothreonine). Residue Lys-920 forms a Glycyl lysine isopeptide (Lys-Gly) (interchain with G-Cter in SUMO2) linkage. The interval 927–1017 (STPIGISNYP…GSTAIAEPVA (91 aa)) is disordered. The segment covering 935–949 (YPESTIATSDVTSES) has biased composition (polar residues). A compositionally biased stretch (basic and acidic residues) spans 961 to 975 (EKGDSESAPEMDGKL). At Ser-965 the chain carries Phosphoserine. A Glycyl lysine isopeptide (Lys-Gly) (interchain with G-Cter in SUMO2) cross-link involves residue Lys-974. Position 1018 is a phosphoserine (Ser-1018). 3 disordered regions span residues 1034-1144 (QEKE…MDRP), 1178-1231 (GTST…PHGH), and 1267-1478 (TEET…DSSS). Over residues 1060–1074 (EEDKERPDVTPKLRQ) the composition is skewed to basic and acidic residues. Phosphoserine is present on residues Ser-1075 and Ser-1096. Over residues 1099–1112 (SQQRASQEQRASQE) the composition is skewed to low complexity. Ser-1115 bears the Phosphoserine mark. Positions 1178 to 1197 (GTSTAEQNSGKQDATVQTER) are enriched in polar residues. Position 1211 is a phosphothreonine (Thr-1211). Residues Ser-1213 and Ser-1216 each carry the phosphoserine modification. Over residues 1269–1282 (ETEEPIVECQECET) the composition is skewed to acidic residues. Over residues 1295 to 1326 (DLGDISSFSSKASSSHHTSSGTSLSAIHSSGS) the composition is skewed to low complexity. Residue Ser-1314 is modified to Phosphoserine. Arg-1329 carries the post-translational modification Omega-N-methylarginine. The residue at position 1339 (Ser-1339) is a Phosphoserine. At Arg-1352 the chain carries Omega-N-methylarginine. Residue Ser-1359 is modified to Phosphoserine. A Glycyl lysine isopeptide (Lys-Gly) (interchain with G-Cter in SUMO2) cross-link involves residue Lys-1362. Residue Ser-1365 is modified to Phosphoserine. The GAR motif lies at 1393–1400 (RGRGRRGR). Phosphoserine occurs at positions 1423 and 1427. A Glycyl lysine isopeptide (Lys-Gly) (interchain with G-Cter in SUMO1); alternate cross-link involves residue Lys-1431. Residue Lys-1431 forms a Glycyl lysine isopeptide (Lys-Gly) (interchain with G-Cter in SUMO2); alternate linkage. 4 positions are modified to phosphoserine: Ser-1457, Ser-1459, Ser-1470, and Ser-1471. The segment covering 1469-1478 (GSSDGLDSSS) has biased composition (low complexity). Residues 1481 to 1600 (NSFVGLRVVA…NRLREQYGLG (120 aa)) are tudor-like. Residues 1492–1520 (WSSNGYFYSGKITRDVGAGKYKLLFDDGY) form an interaction with dimethylated histone H4 region. Residue Lys-1560 forms a Glycyl lysine isopeptide (Lys-Gly) (interchain with G-Cter in SUMO1); alternate linkage. Residue Lys-1560 forms a Glycyl lysine isopeptide (Lys-Gly) (interchain with G-Cter in SUMO2); alternate linkage. The short motif at 1601-1628 (PYEAVTPLTKAADISLDNLVEGKRKRRS) is the UDR element. Thr-1606 is modified (phosphothreonine). 3 positions are modified to phosphoserine: Ser-1615, Ser-1628, and Ser-1632. A disordered region spans residues 1624 to 1715 (RKRRSNISSP…IGEPSVLEEP (92 aa)). The segment covering 1631–1648 (SSPVTPTAASSSSTTPTR) has biased composition (low complexity). A phosphothreonine mark is found at Thr-1635 and Thr-1645. Phosphoserine occurs at positions 1653, 1670, and 1675. Lys-1682 is covalently cross-linked (Glycyl lysine isopeptide (Lys-Gly) (interchain with G-Cter in ubiquitin)). Residues Ser-1698 and Ser-1756 each carry the phosphoserine modification. BRCT domains follow at residues 1749–1845 (LDGP…NYLL) and 1861–1961 (PREN…QHPK).

Homoligomer. Interacts with p53/TP53 (via the central domain). Interacts with DCLRE1C. Interacts with histone H2AX and this requires phosphorylation of H2AX on 'Ser-139'. Interacts with histone H4 that has been dimethylated at 'Lys-20' (H4K20me2). Has low affinity for histone H4 containing monomethylated 'Lys-20' (H4K20me1). Does not bind histone H4 containing unmethylated or trimethylated 'Lys-20' (H4K20me3). Has low affinity for histone H3 that has been dimethylated on 'Lys-79'. Has very low affinity for histone H3 that has been monomethylated on 'Lys-79' (in vitro). Does not bind unmethylated histone H3. Interacts with histone H2A monoubiquitinated at 'Lys-15' (H2AK15Ub). Interacts with PWWP3A/EXPAND1. Interacts with CHEK2; modulates CHEK2 phosphorylation at 'Thr-68' in response to infrared. Interacts with MSL1; this interaction may be required for MSL1 DNA repair activity, but not for histone acetyltransferase activity. Interacts (when phosphorylated by ATM) with RIF1. Interacts (via the Tudor-like domain) with NUDT16L1/TIRR; interaction masks the Tudor-like domain and prevents recruitment to chromatin. Interacts with PAXIP1. Interacts with IFI202A. Interacts with SHLD2. Interacts (when phosphorylated) with TOPBP1. Interacts with GFI1; promoting methylation by PRMT1. Interacts with (phosphorylated) DYNLL1; specifically binds DYNLL1 phosphorylated at 'Ser-88' and promotes its recruitment to double stand breaks (DSBs). Post-translationally, phosphorylated at basal level in the absence of DNA damage. Phosphorylated by ATM in response to DNA damage: phosphorylation at different sites promotes interaction with different set of proteins: phosphorylation at the N-terminus by ATM (residues from 11-181) promotes interaction with PAXIP1 and non-homologous end joining (NHEJ) of dysfunctional telomeres. Phosphorylation by ATM at residues that are located more C-terminus (residues 300-650) leads to promote interaction with RIF1. Interaction with RIF1 leads to disrupt interaction with NUDT16L1/TIRR. Phosphorylation at Thr-1606 and Ser-1615 in the UDR motif blocks interaction with H2AK15ub. Dephosphorylated by PPP4C. Hyperphosphorylation during mitosis correlates with its exclusion from chromatin and DNA lesions. Hyperphosphorylated in an ATR-dependent manner in response to DNA damage induced by UV irradiation. Dephosphorylated by PPP5C. Phosphorylation at Ser-368 and Thr-662 promotes interaction with TOPBP1. Phosphorylated by VRK1. Asymmetrically dimethylated on Arg residues by PRMT1. Methylation is required for DNA binding. In terms of processing, monoubiquitinated at Lys-1682 by MSL2 is reponse to DNA damage, leading to its stabilization.

The protein resides in the nucleus. The protein localises to the chromosome. Its subcellular location is the centromere. It localises to the kinetochore. Its function is as follows. Double-strand break (DSB) repair protein involved in response to DNA damage, telomere dynamics and class-switch recombination (CSR) during antibody genesis. Plays a key role in the repair of double-strand DNA breaks (DSBs) in response to DNA damage by promoting non-homologous end joining (NHEJ)-mediated repair of DSBs and specifically counteracting the function of the homologous recombination (HR) repair protein BRCA1. In response to DSBs, phosphorylation by ATM promotes interaction with RIF1 and dissociation from NUDT16L1/TIRR, leading to recruitment to DSBs sites. Recruited to DSBs sites by recognizing and binding histone H2A monoubiquitinated at 'Lys-15' (H2AK15Ub) and histone H4 dimethylated at 'Lys-20' (H4K20me2), two histone marks that are present at DSBs sites. Required for immunoglobulin class-switch recombination (CSR) during antibody genesis, a process that involves the generation of DNA DSBs. Participates in the repair and the orientation of the broken DNA ends during CSR. In contrast, it is not required for classic NHEJ and V(D)J recombination. Promotes NHEJ of dysfunctional telomeres. This Mus musculus (Mouse) protein is TP53-binding protein 1.